The sequence spans 344 residues: Phosphoribosylformylglycinamidine cyclo-ligase (344 aa).

This sequence belongs to the AIR synthase family.

It localises to the cytoplasm. It carries out the reaction 2-formamido-N(1)-(5-O-phospho-beta-D-ribosyl)acetamidine + ATP = 5-amino-1-(5-phospho-beta-D-ribosyl)imidazole + ADP + phosphate + H(+). Its pathway is purine metabolism; IMP biosynthesis via de novo pathway; 5-amino-1-(5-phospho-D-ribosyl)imidazole from N(2)-formyl-N(1)-(5-phospho-D-ribosyl)glycinamide: step 2/2. The chain is Phosphoribosylformylglycinamidine cyclo-ligase from Leptospira interrogans serogroup Icterohaemorrhagiae serovar Lai (strain 56601).